The following is a 381-amino-acid chain: Putative F-box protein At4g17200 (381 aa).

The F-box domain maps to 1 to 47; sequence MTTMSDLSPDLVGEILTRVPMTSLISVRCTCKMWNALSKEGIFFKAA.

The chain is Putative F-box protein At4g17200 from Arabidopsis thaliana (Mouse-ear cress).